The chain runs to 179 residues: MSSDAALILEAANFAAEKHKQQRRKDPEKTPYINHPLGVARILSHEGGITDTAVLQAALLHDTVEDTNTTFEEIELHFGQDVRNIVEEVTDDKTLPKMERKRLQMEHAPHCSQKAKLVKLADKLYNLRDLKRCTPEGWSEQRVQEYFQWASEVVKGLRGTNSILEGKLDHMFMDQGIAV.

Positions 32–127 (YINHPLGVAR…VKLADKLYNL (96 aa)) constitute an HD domain. Mn(2+) contacts are provided by H35, H61, and D62. Active-site nucleophile residues include E65 and D66. Residue D122 coordinates Mn(2+).

The protein belongs to the MESH1 family. It depends on Mn(2+) as a cofactor.

The catalysed reaction is guanosine 3',5'-bis(diphosphate) + H2O = GDP + diphosphate + H(+). Functionally, ppGpp hydrolyzing enzyme involved in starvation response. The chain is Guanosine-3',5'-bis(diphosphate) 3'-pyrophosphohydrolase MESH1 (hddc3) from Xenopus tropicalis (Western clawed frog).